Consider the following 108-residue polypeptide: Small ribosomal subunit protein uS10 (108 aa).

It belongs to the universal ribosomal protein uS10 family. In terms of assembly, part of the 30S ribosomal subunit.

Involved in the binding of tRNA to the ribosomes. This Mycoplasma pneumoniae (strain ATCC 29342 / M129 / Subtype 1) (Mycoplasmoides pneumoniae) protein is Small ribosomal subunit protein uS10.